We begin with the raw amino-acid sequence, 420 residues long: WD repeat-containing protein jip5 (420 aa).

WD repeat units lie at residues 9–48 (PLSA…VDSD), 72–111 (RHKG…VENK), 117–158 (DKNG…SKVS), 221–262 (VSSV…DQDE), 271–314 (GGGE…VVSE), and 318–355 (DETE…GDGV). Residues 39–63 (RLPSDEVDSDDDGASTSSSRTGRGH) are disordered. The tract at residues 350-420 (DSGDGVNGNE…QAVMAFHDLD (71 aa)) is disordered. A compositionally biased stretch (acidic residues) spans 368 to 387 (DDSDEDSDDGDDDDDSGDSD). The span at 394-406 (DARKKRKKGKTPK) shows a compositional bias: basic residues.

It belongs to the WD repeat WDR55 family.

It localises to the nucleus. The protein localises to the nucleolus. In Aspergillus terreus (strain NIH 2624 / FGSC A1156), this protein is WD repeat-containing protein jip5 (jip5).